The primary structure comprises 327 residues: Asnovolin J 5',6'-dehydrogenase nvfM (327 aa).

Residues 9–29 form a helical membrane-spanning segment; it reads VAIVGASGVTGGSIVNGLLAL. Residues 13–19 and lysine 47 each bind NADP(+); that span reads GASGVTG. The active-site Proton acceptor is the lysine 130.

This sequence belongs to the NmrA-type oxidoreductase family.

It localises to the membrane. The enzyme catalyses asnovolin K + AH2 = asnovolin A + A. The catalysed reaction is chermesin D methyl ester + AH2 = asnovolin J + A. It participates in secondary metabolite biosynthesis; terpenoid biosynthesis. Asnovolin J 5',6'-dehydrogenase; part of the gene cluster that mediates the biosynthesis of novofumigatonin, a heavily oxygenated meroterpenoid containing a unique orthoester moiety. The first step of the pathway is the synthesis of 3,5-dimethylorsellinic acid (DMOA) by the polyketide synthase nvfA via condensation of one acetyl-CoA starter unit with 3 malonyl-CoA units and 2 methylations. DMOA is then converted to farnesyl-DMOA by the farnesyltransferase nvfB. Epoxydation by FAD-dependent monooxygenase nvfK, followed by a protonation-initiated cyclization catalyzed by the terpene cyclase nvfL leads to the production of asnavolin H. The short chain dehydrogenase nvfC then as a 3-OH dehydrogenase of asnovolin H to yield chemesin D. There are two branches to synthesize asnovolin A from chemesin D. In one branch, chemesin D undergoes Baeyer-Villiger oxidation by nvfH, methylation by nvfJ, and enoyl reduction by the nvfM D enoylreductase that reduces the double bond between C-5'and C-6', to form respectively asnovolin I, asnovolin K, and asnovolin A. In the other branch, the methylation precedes the Baeyer-Villiger oxidation and the enoyl reduction to yield asnovolin A via the asnovolin J intermediate. Asnovolin A is further converted to fumigatonoid A by the Fe(II)/2-oxoglutarate-dependent dioxygenase nvfI that catalyzes an endoperoxidation reaction. The alpha/beta hydrolase nvfD then acts as an epimerase that converts fumigatonoid A to its C-5' epimer, which then undergoes spontaneous or nvfD-catalyzed lactonization. The following step utilizes the ketoreductase nvfG to produce fumigatonoid B. The dioxygenase nvfE further converts fumigatonoid B into fumigatonoid C. Finally the Fe(II)/2-oxoglutarate-dependent dioxygenase nvfF catalyzes two rounds of oxidation to transform fumigatonoid C into the end product, novofumigatonin A. The polypeptide is Asnovolin J 5',6'-dehydrogenase nvfM (Aspergillus novofumigatus (strain IBT 16806)).